Here is a 579-residue protein sequence, read N- to C-terminus: Mitogen-activated protein kinase kinase kinase 7 (579 aa).

Residues 1 to 300 (MSTASAASSS…FPGADEPLQY (300 aa)) are interaction with MAPK8IP1. A Protein kinase domain is found at 36–291 (IEVEEVVGRG…KIMTHLMRYF (256 aa)). Residues 42 to 50 (VGRGAFGVV) and lysine 63 contribute to the ATP site. Lysine 72 is covalently cross-linked (Glycyl lysine isopeptide (Lys-Gly) (interchain with G-Cter in ubiquitin)). Catalysis depends on aspartate 156, which acts as the Proton acceptor. Lysine 158 participates in a covalent cross-link: Glycyl lysine isopeptide (Lys-Gly) (interchain with G-Cter in ubiquitin). A phosphothreonine; by autocatalysis mark is found at threonine 184 and threonine 187. Residue serine 192 is modified to Phosphoserine; by autocatalysis. A Glycyl lysine isopeptide (Lys-Gly) (interchain with G-Cter in ubiquitin) cross-link involves residue lysine 209. Disordered regions lie at residues 301–338 (PCQY…MEQV) and 354–391 (KNQA…MSAD). The span at 306–338 (DEGQSNSATSTGSFMDIASTNTSNKSDTNMEQV) shows a compositional bias: polar residues. Positions 361 to 375 (SESGRLSLGASRGSS) are enriched in low complexity. Phosphoserine occurs at positions 367, 389, and 412. Residues 416–425 (LTVTGTEPGQ) show a composition bias toward polar residues. The disordered stretch occupies residues 416 to 466 (LTVTGTEPGQVSSRSSSPSVRMITTSGPTSEKPARSHPWTPDDSTDTNGSD). Positions 426-436 (VSSRSSSPSVR) are enriched in low complexity. Serine 428 carries the phosphoserine modification.

This sequence belongs to the protein kinase superfamily. STE Ser/Thr protein kinase family. MAP kinase kinase kinase subfamily. Can form homodimer. Binds both upstream activators and downstream substrates in multimolecular complexes. Interacts with TAB1/MAP3K7IP1, TAB2/MAP3K7IP2 and TAB3/MAP3K7IP3. Identified in the TRIKA2 complex composed of MAP3K7/TAK1, TAB1/MAP3K7IP1 and TAB2/MAP3K7IP2. Interacts with PPM1L and PPM1B/PP2CB. Interaction with PP2A and PPP6C leads to its repressed activity. Interacts with TRAF6 and TAB1/MAP3K7IP1; during IL-1 signaling. Interacts with TAOK1 and TAOK2; interaction with TAOK2 interferes with MAP3K7 interaction with IKKA, thus preventing NF-kappa-B activation. Interacts with DYNC2I2 (via WD domains). Interacts with CYLD and RBCK1. Interacts with TGFBR1; induces MAP3K7/TAK1 activation by TRAF6. Interacts with MAPK8IP1 and SMAD6. Interacts with isoform 1 of VRK2. Interacts with DAB2; the interaction is induced by TGF-beta stimulation and may mediate TGF-beta stimulated JNK activation. Interacts with TRIM5. Part of a complex containing ITCH, NDFIP1 and MAP3K7. Interacts with PLEKHM1 (via N- and C-terminus). Interacts with TRIM8. Found in a complex with SH3RF1, RAC2, MAP2K7/MKK7, MAPK8IP1/JIP1, MAPK8/JNK1 and MAPK9/JNK2. Interacts with SASH1. Interacts with RIPK1. Mg(2+) serves as cofactor. In terms of processing, association with TAB1/MAP3K7IP1 promotes autophosphorylation and subsequent activation. Association with TAB2/MAP3K7IP2, itself associated with free unanchored Lys-63 polyubiquitin chain, promotes autophosphorylation and subsequent activation of MAP3K7. Dephosphorylation at Thr-187 by PP2A and PPP6C leads to inactivation. Post-translationally, 'Lys-48'-linked polyubiquitination at Lys-72 is induced by TNFalpha, and leads to proteasomal degradation. Undergoes 'Lys-48'-linked polyubiquitination catalyzed by ITCH. 'Lys-63'-linked polyubiquitination at Lys-158 by TRIM8 does not lead to proteasomal degradation but contributes to autophosphorylation and activation. Deubiquitinated by CYLD, a protease that selectively cleaves 'Lys-63'-linked ubiquitin chains.Deubiquitinated by USP19; leading to negative regulation of TNF-alpha- and IL-1beta-triggered NF-kappa-B activation.

The protein localises to the cytoplasm. The protein resides in the cell membrane. It catalyses the reaction L-seryl-[protein] + ATP = O-phospho-L-seryl-[protein] + ADP + H(+). It carries out the reaction L-threonyl-[protein] + ATP = O-phospho-L-threonyl-[protein] + ADP + H(+). Activated by pro-inflammatory cytokines and in response to physical and chemical stresses, including osmotic stress, oxidative stress, arsenic and ultraviolet light irradiation. Activated by 'Lys-63'-linked polyubiquitination and by autophosphorylation. Association with TAB1/MAP3K7IP1 and TAB2/MAP3K7IP2 promotes activation through autophosphorylation, whereas PPM1B/PP2CB, PP2A and PPP6C dephosphorylation leads to inactivation. Ceramides are also able to activate MAP3K7/TAK1. Its function is as follows. Serine/threonine kinase which acts as an essential component of the MAP kinase signal transduction pathway. Plays an important role in the cascades of cellular responses evoked by changes in the environment. Mediates signal transduction of TRAF6, various cytokines including interleukin-1 (IL-1), transforming growth factor-beta (TGFB), TGFB-related factors like BMP2 and BMP4, toll-like receptors (TLR), tumor necrosis factor receptor CD40 and B-cell receptor (BCR). Once activated, acts as an upstream activator of the MKK/JNK signal transduction cascade and the p38 MAPK signal transduction cascade through the phosphorylation and activation of several MAP kinase kinases like MAP2K1/MEK1, MAP2K3/MKK3, MAP2K6/MKK6 and MAP2K7/MKK7. These MAP2Ks in turn activate p38 MAPKs and c-jun N-terminal kinases (JNKs); both p38 MAPK and JNK pathways control the transcription factors activator protein-1 (AP-1). Independently of MAP2Ks and p38 MAPKs, acts as a key activator of NF-kappa-B by promoting activation of the I-kappa-B-kinase (IKK) core complex. Mechanistically, recruited to polyubiquitin chains of RIPK2 and IKBKG/NEMO via TAB2/MAP3K7IP2 and TAB3/MAP3K7IP3, and catalyzes phosphorylation and activation of IKBKB/IKKB component of the IKK complex, leading to NF-kappa-B activation. In osmotic stress signaling, plays a major role in the activation of MAPK8/JNK1, but not that of NF-kappa-B. Promotes TRIM5 capsid-specific restriction activity. Phosphorylates RIPK1 at 'Ser-321' which positively regulates RIPK1 interaction with RIPK3 to promote necroptosis but negatively regulates RIPK1 kinase activity and its interaction with FADD to mediate apoptosis. Phosphorylates STING1 in response to cGAMP-activation, promoting association between STEEP1 and STING1 and STING1 translocation to COPII vesicles. The polypeptide is Mitogen-activated protein kinase kinase kinase 7 (Map3k7) (Mus musculus (Mouse)).